Consider the following 92-residue polypeptide: uncharacterized protein (92 aa).

This is an uncharacterized protein from Haemophilus influenzae (strain ATCC 51907 / DSM 11121 / KW20 / Rd).